The following is a 401-amino-acid chain: Canavanine gamma-lyase (401 aa).

The residue at position 214 (Lys-214) is an N6-(pyridoxal phosphate)lysine.

The protein belongs to the trans-sulfuration enzymes family. It depends on pyridoxal 5'-phosphate as a cofactor.

The enzyme catalyses L-canavanine + H2O = N-hydroxyguanidine + L-homoserine. In terms of biological role, lyase involved in the degradation of canavanine, the delta-oxa-analog of arginine, allowing growth on canavanine as sole nitrogen and carbon source. Catalyzes the elimination of hydroxyguanidine from canavanine with a subsequent water addition to yield homoserine. This is Canavanine gamma-lyase from Rhizobium leguminosarum bv. trifolii (strain WSM2304).